Here is a 277-residue protein sequence, read N- to C-terminus: Tryptophan synthase alpha chain (277 aa).

Catalysis depends on proton acceptor residues Glu51 and Glu62.

The protein belongs to the TrpA family. In terms of assembly, tetramer of two alpha and two beta chains.

The catalysed reaction is (1S,2R)-1-C-(indol-3-yl)glycerol 3-phosphate + L-serine = D-glyceraldehyde 3-phosphate + L-tryptophan + H2O. The protein operates within amino-acid biosynthesis; L-tryptophan biosynthesis; L-tryptophan from chorismate: step 5/5. Functionally, the alpha subunit is responsible for the aldol cleavage of indoleglycerol phosphate to indole and glyceraldehyde 3-phosphate. The protein is Tryptophan synthase alpha chain of Phenylobacterium zucineum (strain HLK1).